A 517-amino-acid chain; its full sequence is MATILLLLLGLLVGLPLLRAHGVTGSAAPTPPPLPVLPVPSYAQLQWQLSEMALFLHFGPNTFTDSEWGSVRADPAVFAPSALDAGQWARAAAAGGFGRVVLTAKHHDGFCLWPSALTNYSVAASPWKGGAGDVVGELAAAARAEGIGLGLYLSPWDRHEPVYGDTVAYNEHYLGQMTELLTRYGDVEEVWLDGAKGEGKDMDYMFDAWFALIHQLQQRVVIFSDAGPDTRWVGDEAGVAGYTCWSPFNKSTVTIGHIIPEYSRCGDPFGQDWVPAECDVSIRPGWFWHASEKPKNATTLLDIYYKSVGRNCLLILNVPPNSSGLISTEDMQVLQEFTEIRQTIFSQNFAANATVTASTVRGGLGNQQFAPSNVLQESIYSYWAPEEGQSSWEMLFDLGQSASFNVIQLQEPIQMGQRVIKFRVEILVDELWQTIVEGTTIGYKRLFQFPVVEGQFLKLSIDGARADPLISFFGVFTDSFSVTYSLENHEKPSVVNSSEVIMLRTDHSFGNKSIATM.

The N-terminal stretch at 1-20 (MATILLLLLGLLVGLPLLRA) is a signal peptide. Residues N119, N249, N296, N321, N352, N496, and N511 are each glycosylated (N-linked (GlcNAc...) asparagine).

It belongs to the glycosyl hydrolase 29 family.

It is found in the secreted. The protein resides in the extracellular space. It localises to the apoplast. It carries out the reaction an alpha-L-fucoside + H2O = L-fucose + an alcohol. Alpha-L-fucosidase is responsible for hydrolyzing the alpha-1,6-linked fucose joined to the reducing-end N-acetylglucosamine of the carbohydrate moieties of glycoproteins. Active only against 2'-fucosyl-lactitol when heterologously expressed. The polypeptide is Putative alpha-L-fucosidase 1 (Oryza sativa subsp. japonica (Rice)).